The sequence spans 66 residues: Large ribosomal subunit protein bL33 (66 aa).

It belongs to the bacterial ribosomal protein bL33 family.

This is Large ribosomal subunit protein bL33 from Synechococcus sp. (strain CC9902).